Consider the following 298-residue polypeptide: Short-chain dehydrogenase reductase 4 (298 aa).

An NAD(+)-binding site is contributed by 50-74 (IITGGASGIGAEAVRLFTDHGAKVV). Residue S182 coordinates substrate. Y195 functions as the Proton acceptor in the catalytic mechanism.

The protein belongs to the short-chain dehydrogenases/reductases (SDR) family.

This is Short-chain dehydrogenase reductase 4 (SDR4) from Arabidopsis thaliana (Mouse-ear cress).